Consider the following 600-residue polypeptide: CTP synthase (600 aa).

The Glutamine amidotransferase type-1 domain occupies 304–570 (TIVLVGKYTH…IQSGEEVEWS (267 aa)). Active-site for GATase activity residues include C403, H532, and E534.

Belongs to the CTP synthase family.

It carries out the reaction UTP + L-glutamine + ATP + H2O = CTP + L-glutamate + ADP + phosphate + 2 H(+). It participates in pyrimidine metabolism; CTP biosynthesis via de novo pathway; CTP from UDP: step 2/2. Its function is as follows. Catalyzes the ATP-dependent amination of UTP to CTP with either L-glutamine or ammonia as the source of nitrogen. This Schizosaccharomyces pombe (strain 972 / ATCC 24843) (Fission yeast) protein is CTP synthase (ura7).